A 91-amino-acid polypeptide reads, in one-letter code: uncharacterized protein (91 aa).

A run of 3 helical transmembrane segments spans residues 4–21, 28–50, and 60–82; these read YAII…LRRG, IIEV…SHAV, and VKAF…GTYL.

The protein resides in the cell membrane. This is an uncharacterized protein from Archaeoglobus fulgidus (strain ATCC 49558 / DSM 4304 / JCM 9628 / NBRC 100126 / VC-16).